The primary structure comprises 20 residues: Brevinin-1DYc (20 aa).

A disulfide bond links Cys14 and Cys20.

As to expression, expressed by the skin glands.

It localises to the secreted. Its function is as follows. Antimicrobial peptide. Has low activity against the Gram-positive bacterium S.aureus and the Gram-negative bacterium E.coli (MIC&lt;15 uM). Has a strong hemolytic activity. This chain is Brevinin-1DYc, found in Rana dybowskii (Dybovsky's frog).